A 224-amino-acid chain; its full sequence is Deoxyribose-phosphate aldolase (224 aa).

Asp92 acts as the Proton donor/acceptor in catalysis. Lys154 (schiff-base intermediate with acetaldehyde) is an active-site residue. Lys183 functions as the Proton donor/acceptor in the catalytic mechanism.

The protein belongs to the DeoC/FbaB aldolase family. DeoC type 1 subfamily.

The protein resides in the cytoplasm. The enzyme catalyses 2-deoxy-D-ribose 5-phosphate = D-glyceraldehyde 3-phosphate + acetaldehyde. The protein operates within carbohydrate degradation; 2-deoxy-D-ribose 1-phosphate degradation; D-glyceraldehyde 3-phosphate and acetaldehyde from 2-deoxy-alpha-D-ribose 1-phosphate: step 2/2. In terms of biological role, catalyzes a reversible aldol reaction between acetaldehyde and D-glyceraldehyde 3-phosphate to generate 2-deoxy-D-ribose 5-phosphate. The sequence is that of Deoxyribose-phosphate aldolase from Histophilus somni (strain 129Pt) (Haemophilus somnus).